We begin with the raw amino-acid sequence, 113 residues long: U11-theraphotoxin-Hhn1g (113 aa).

The first 21 residues, 1–21 (MNTVRVTFLLVFVLAVSLGQA), serve as a signal peptide directing secretion. Residues 22-74 (DKDENRMEMQEKTEQGKSYLDFAENLLLQKLEELEAKLLEEDSEESRNSRQKR) constitute a propeptide that is removed on maturation. A disordered region spans residues 61-83 (EEDSEESRNSRQKRCIGEGVPCD). 3 cysteine pairs are disulfide-bonded: Cys75/Cys90, Cys82/Cys95, and Cys89/Cys110.

It belongs to the neurotoxin 14 (magi-1) family. 01 (HNTX-16) subfamily. In terms of tissue distribution, expressed by the venom gland.

The protein localises to the secreted. Its function is as follows. Probable ion channel inhibitor. The protein is U11-theraphotoxin-Hhn1g of Cyriopagopus hainanus (Chinese bird spider).